Reading from the N-terminus, the 102-residue chain is Small ribosomal subunit protein uS10 (102 aa).

This sequence belongs to the universal ribosomal protein uS10 family. In terms of assembly, part of the 30S ribosomal subunit.

Involved in the binding of tRNA to the ribosomes. The chain is Small ribosomal subunit protein uS10 from Saccharolobus islandicus (strain M.16.4 / Kamchatka #3) (Sulfolobus islandicus).